The sequence spans 468 residues: E3 ubiquitin-protein ligase RGLG2 (468 aa).

The tract at residues 1–89 is disordered; it reads MGTGNSKENW…PSQSYGSDNK (89 aa). G2 is lipidated: N-myristoyl glycine. Over residues 12 to 45 the composition is skewed to low complexity; that stretch reads QSSFRSTSASSASPSSSSWASQQSYPQYGAESYN. A compositionally biased stretch (pro residues) spans 46–65; sequence YPPPPSYAQPPEYTQPPPPL. A compositionally biased stretch (low complexity) spans 66–84; sequence YSTQPYSAPSYSAPPSQSY. Residues 122–342 enclose the VWFA domain; that stretch reads NLIVGIDFTK…KETEFALSAL (221 aa). The tract at residues 369–416 is disordered; sequence FPLPPPMRGGSSSYNSPKPSRLPSFKPSVPPHPTEGYHVRSSPVPPPT. An RING-type zinc finger spans residues 425-458; that stretch reads CPICLSNPKDMAFGCGHQTCCECGPDLQMCPICR.

In terms of assembly, interacts with the heterodimer UBC35/UEV1B, UBC35 alone, PIN1, but not with UCB2, UCB9, UEV1B or UEV1C alone. Interacts with ERF053. In terms of processing, N-myristoylated. Ubiquitously expressed.

Its subcellular location is the cell membrane. The protein resides in the nucleus. It carries out the reaction S-ubiquitinyl-[E2 ubiquitin-conjugating enzyme]-L-cysteine + [acceptor protein]-L-lysine = [E2 ubiquitin-conjugating enzyme]-L-cysteine + N(6)-ubiquitinyl-[acceptor protein]-L-lysine.. E3 ubiquitin-protein ligase that mediates the formation of 'Lys-63'-linked ubiquitin chains. Regulates apical dominance by acting on the auxin transport proteins abundance. Mediates ubiquitination and subsequent proteasomal degradation of ERF053 in response to drought stress. Acts as a negative regulator of drought stress response. The sequence is that of E3 ubiquitin-protein ligase RGLG2 from Arabidopsis thaliana (Mouse-ear cress).